A 110-amino-acid chain; its full sequence is Large ribosomal subunit protein uL22 (110 aa).

Belongs to the universal ribosomal protein uL22 family. In terms of assembly, part of the 50S ribosomal subunit.

Its function is as follows. This protein binds specifically to 23S rRNA; its binding is stimulated by other ribosomal proteins, e.g. L4, L17, and L20. It is important during the early stages of 50S assembly. It makes multiple contacts with different domains of the 23S rRNA in the assembled 50S subunit and ribosome. Functionally, the globular domain of the protein is located near the polypeptide exit tunnel on the outside of the subunit, while an extended beta-hairpin is found that lines the wall of the exit tunnel in the center of the 70S ribosome. The sequence is that of Large ribosomal subunit protein uL22 from Exiguobacterium sp. (strain ATCC BAA-1283 / AT1b).